Consider the following 699-residue polypeptide: Polyribonucleotide nucleotidyltransferase (699 aa).

Mg(2+)-binding residues include Asp488 and Asp494. The KH domain maps to 555–614; it reads PRIYSIKVNPDKIKDVIGKGGSVIRSLTEETNTIIDIEDNGIIKIVALDYDKAKQAIRRI. The S1 motif domain occupies 624-692; the sequence is GAVYTGKVSH…RQGRIRLSMK (69 aa).

It belongs to the polyribonucleotide nucleotidyltransferase family. In terms of assembly, component of the RNA degradosome, which is a multiprotein complex involved in RNA processing and mRNA degradation. Mg(2+) is required as a cofactor.

Its subcellular location is the cytoplasm. The enzyme catalyses RNA(n+1) + phosphate = RNA(n) + a ribonucleoside 5'-diphosphate. Its function is as follows. Involved in mRNA degradation. Catalyzes the phosphorolysis of single-stranded polyribonucleotides processively in the 3'- to 5'-direction. This chain is Polyribonucleotide nucleotidyltransferase, found in Blochmanniella pennsylvanica (strain BPEN).